The primary structure comprises 171 residues: MEPDNSPRKIQFTVPLLEPHLDPEAAEQIRRRRPTPATLVLTSDQSSPEVDEDRIPNPLLKSTLSMSPRQRKKMTRTTPTMKELQTMVEHHLGQQKQGEEPEGATESTGNQESCPPGIPDTGSASRPDTSGTAQKPAESKPKTQEQRGVEPSTEDLSAHMLPLDSQGASLV.

Met1 carries the post-translational modification N-acetylmethionine. Positions 9–12 (KIQF) are essential for activity. The disordered stretch occupies residues 17–171 (LEPHLDPEAA…PLDSQGASLV (155 aa)). A compositionally biased stretch (basic and acidic residues) spans 19–29 (PHLDPEAAEQI). Thr35 is modified (phosphothreonine; by PKA). An essential for activity region spans residues 42 to 54 (TSDQSSPEVDEDR). Phosphoserine occurs at positions 43, 46, 47, and 67. Polar residues predominate over residues 122–133 (GSASRPDTSGTA). A compositionally biased stretch (basic and acidic residues) spans 137 to 148 (AESKPKTQEQRG). Residues 143–171 (TQEQRGVEPSTEDLSAHMLPLDSQGASLV) are interaction with PPP1R15A.

This sequence belongs to the protein phosphatase inhibitor 1 family. In terms of assembly, interacts with PPP1R15A. In terms of processing, phosphorylation of Thr-35 is required for activity.

Its function is as follows. Inhibitor of protein-phosphatase 1. This protein may be important in hormonal control of glycogen metabolism. Hormones that elevate intracellular cAMP increase I-1 activity in many tissues. I-1 activation may impose cAMP control over proteins that are not directly phosphorylated by PKA. Following a rise in intracellular calcium, I-1 is inactivated by calcineurin (or PP2B). Does not inhibit type-2 phosphatases. This chain is Protein phosphatase 1 regulatory subunit 1A (Ppp1r1a), found in Rattus norvegicus (Rat).